We begin with the raw amino-acid sequence, 145 residues long: Protein FimA (145 aa).

This sequence belongs to the fimbrial protein family.

It localises to the fimbrium. This is Protein FimA (fimA) from Bordetella pertussis.